Consider the following 330-residue polypeptide: GTPase Obg (330 aa).

The Obg domain occupies 1-159 (MHFIDEVKIY…MWIHLSLKLL (159 aa)). One can recognise an OBG-type G domain in the interval 160-327 (SDVGLVGLPN…IVKLALETIK (168 aa)). Residues 166-173 (GLPNAGKS), 191-195 (FTTLV), 212-215 (DIPG), 279-282 (NKCD), and 308-310 (STC) each bind GTP. Residues S173 and T193 each coordinate Mg(2+).

This sequence belongs to the TRAFAC class OBG-HflX-like GTPase superfamily. OBG GTPase family. Monomer. The cofactor is Mg(2+).

It is found in the cytoplasm. In terms of biological role, an essential GTPase which binds GTP, GDP and possibly (p)ppGpp with moderate affinity, with high nucleotide exchange rates and a fairly low GTP hydrolysis rate. Plays a role in control of the cell cycle, stress response, ribosome biogenesis and in those bacteria that undergo differentiation, in morphogenesis control. The polypeptide is GTPase Obg (Rickettsia rickettsii (strain Iowa)).